Here is a 695-residue protein sequence, read N- to C-terminus: MASYKGLIVDVNGRSHENNLAHRTREIDRERLIVRRGQPFSITLQCSDSLPPKHHLELVLHLGKRDEVVIKVQKEHGARDKWWFNQQGAQDEILLTLHSPANAVIGHYRLAVLVMSPDGHIVERADKISFHMLFNPWCRDDMVYLPDESKLQEYVMNEDGVIYMGTWDYIRSIPWNYGQFEDYVMDICFEVLDNSPAALKNSEMDIEHRSDPVYVGRTITAMVNSNGDRGVLTGRWEEPYTDGVAPYRWTGSVPILQQWSKAGVRPVKYGQCWVFAAVACTVLRCLGIPTRPITNFASAHDVDGNLSVDFLLNERLESLDSRQRSDSSWNFHCWVESWMSREDLPEGNDGWQVLDPTPQELSDGEFCCGPCPVAAIKEGNLGVKYDAPFVFAEVNADTIYWIVQKDGQRRKITEDHASVGKNISTKSVYGNHREDVTLHYKYPEGSQKEREVYKKAGRRVTEPSNEIAEQGRLQLSIKHAQPVFGTDFDVIVEVKNEGGRDAHAQLTMLAMAVTYNSLRRGECQRKTISVTVPAHKAHKEVMRLHYDDYVRCVSEHHLIRVKALLDAPGENGPIMTVANIPLSTPELLVQVPGKAVVWEPLTAYVSFTNPLPVPLKGGVFTLEGAGLLSATQIHVNGAVAPSGKVSVKLSFSPMRTGVRKLLVDFDSDRLKDVKGVTTVVVHKKYRSLITGLHTD.

Residues cysteine 272, histidine 332, and aspartate 355 contribute to the active site. 5 residues coordinate Ca(2+): asparagine 395, aspartate 397, glutamate 434, glutamate 444, and glutamate 449. GTP is bound by residues 476–482 (SIKHAQP) and 578–581 (ANIP).

It belongs to the transglutaminase superfamily. Transglutaminase family. In terms of assembly, monomer. It depends on Ca(2+) as a cofactor.

The protein localises to the cytoplasm. Its subcellular location is the cytosol. The protein resides in the nucleus. It localises to the chromosome. It is found in the secreted. The protein localises to the extracellular space. Its subcellular location is the extracellular matrix. The protein resides in the cell membrane. It localises to the mitochondrion. The catalysed reaction is L-glutaminyl-[protein] + L-lysyl-[protein] = [protein]-L-lysyl-N(6)-5-L-glutamyl-[protein] + NH4(+). It catalyses the reaction L-glutaminyl-[protein] + serotonin = 5-serotonyl-L-glutamyl-[protein] + NH4(+). The enzyme catalyses L-glutaminyl-[protein] + dopamine = 5-dopaminyl-L-glutamyl-[protein] + NH4(+). It carries out the reaction L-glutaminyl-[protein] + histamine = 5-histaminyl-L-glutamyl-[protein] + NH4(+). The catalysed reaction is L-glutaminyl-[protein] + (R)-noradrenaline = 5-(R)-noradrenalinyl-L-glutamyl-[protein] + NH4(+). It catalyses the reaction L-glutaminyl-[protein] + H2O = L-glutamyl-[protein] + NH4(+). Its activity is regulated as follows. Acyltransferase activity is regulated by the binding of GTP and Ca(2+): inactivated by GTP, which stabilizes its closed structure, thereby obstructing the accessibility of substrates to the active sites. In contrast, Ca(2+) acts as a cofactor by inducing conformational change to the active open form. In absence of Ca(2+), Mg(2+) may bind Ca(2+)-binding sites, promoting GTP-binding and subsequent inhibition of the acyltransferase activity. Functionally, calcium-dependent acyltransferase that catalyzes the formation of covalent bonds between peptide-bound glutamine and various primary amines, such as gamma-amino group of peptide-bound lysine, or mono- and polyamines, thereby producing cross-linked or aminated proteins, respectively. Involved in many biological processes, such as bone development, angiogenesis, wound healing, cellular differentiation, chromatin modification and apoptosis. Acts as a protein-glutamine gamma-glutamyltransferase by mediating the cross-linking of proteins: under physiological conditions, the protein cross-linking activity is inhibited by GTP; inhibition is relieved by Ca(2+) in response to various stresses. When secreted, catalyzes cross-linking of proteins of the extracellular matrix, resulting in the formation of scaffolds. Plays a key role during apoptosis, both by (1) promoting the cross-linking of cytoskeletal proteins resulting in condensation of the cytoplasm, and by (2) mediating cross-linking proteins of the extracellular matrix, resulting in the irreversible formation of scaffolds that stabilize the integrity of the dying cells before their clearance by phagocytosis, thereby preventing the leakage of harmful intracellular components. In addition to protein cross-linking, can use different monoamine substrates to catalyze a vast array of protein post-translational modifications: mediates aminylation of serotonin, dopamine, noradrenaline or histamine into glutamine residues of target proteins to generate protein serotonylation, dopaminylation, noradrenalinylation or histaminylation, respectively. Mediates protein serotonylation of small GTPases during activation and aggregation of platelets, leading to constitutive activation of these GTPases. Plays a key role in chromatin organization by mediating serotonylation and dopaminylation of histone H3. Catalyzes serotonylation of 'Gln-5' of histone H3 (H3Q5ser) during serotonergic neuron differentiation, thereby facilitating transcription. Acts as a mediator of neurotransmission-independent role of nuclear dopamine in ventral tegmental area (VTA) neurons: catalyzes dopaminylation of 'Gln-5' of histone H3 (H3Q5dop), thereby regulating relapse-related transcriptional plasticity in the reward system. Also acts as a protein deamidase by mediating the side chain deamidation of specific glutamine residues of proteins to glutamate. May also act as an isopeptidase cleaving the previously formed cross-links. Also able to participate in signaling pathways independently of its acyltransferase activity: acts as a signal transducer in alpha-1 adrenergic receptor-mediated stimulation of phospholipase C-delta (PLCD) activity and is required for coupling alpha-1 adrenergic agonists to the stimulation of phosphoinositide lipid metabolism. The protein is Protein-glutamine gamma-glutamyltransferase 2 of Pagrus major (Red sea bream).